Here is a 303-residue protein sequence, read N- to C-terminus: tRNA pseudouridine synthase A (303 aa).

The active-site Nucleophile is the Asp-59. Position 128 (Tyr-128) interacts with substrate.

This sequence belongs to the tRNA pseudouridine synthase TruA family. As to quaternary structure, homodimer.

It carries out the reaction uridine(38/39/40) in tRNA = pseudouridine(38/39/40) in tRNA. Formation of pseudouridine at positions 38, 39 and 40 in the anticodon stem and loop of transfer RNAs. The polypeptide is tRNA pseudouridine synthase A (Bifidobacterium longum (strain DJO10A)).